A 340-amino-acid chain; its full sequence is Guanine nucleotide-binding protein subunit beta-1 (340 aa).

7 WD repeats span residues 53 to 83 (GHLA…IVWD), 95 to 125 (LRSS…SIYS), 141 to 170 (GHTG…ALWD), 182 to 212 (GHTG…KLWD), 224 to 254 (GHES…RLFD), 268 to 298 (NIIC…NVWD), and 310 to 340 (GHDN…KIWN).

Belongs to the WD repeat G protein beta family. As to quaternary structure, g proteins are composed of 3 units, alpha, beta and gamma. Interacts with G protein gamma subunits gpc-1 and gpc-2 and with egl-10 and eat-16. Interacts with goa-1 (in GDP-bound form).

Guanine nucleotide-binding proteins (G proteins) are involved as a modulator or transducer in various transmembrane signaling systems. The beta and gamma chains are required for the GTPase activity, for replacement of GDP by GTP, and for G protein-effector interaction. In the early embryo, controls the magnitude of the forces acting on centrosomes but is not required for generating asymmetric forces. This Caenorhabditis briggsae protein is Guanine nucleotide-binding protein subunit beta-1 (gpb-1).